The following is a 410-amino-acid chain: Dihydrolipoyllysine-residue succinyltransferase component of 2-oxoglutarate dehydrogenase complex (410 aa).

Positions 3–81 constitute a Lipoyl-binding domain; the sequence is IINIFIPDLP…QVIGTLLKIG (79 aa). Lys44 carries the post-translational modification N6-lipoyllysine. The region spanning 112 to 150 is the Peripheral subunit-binding (PSBD) domain; it reads TYSPTVRRLISMHDLRDVDIIQGTGTKNRLTRKDILNYL. Active-site residues include His381 and Asp385.

The protein belongs to the 2-oxoacid dehydrogenase family. In terms of assembly, forms a 24-polypeptide structural core with octahedral symmetry. Part of the 2-oxoglutarate dehydrogenase (OGDH) complex composed of E1 (2-oxoglutarate dehydrogenase), E2 (dihydrolipoamide succinyltransferase) and E3 (dihydrolipoamide dehydrogenase); the complex contains multiple copies of the three enzymatic components (E1, E2 and E3). (R)-lipoate serves as cofactor.

The catalysed reaction is N(6)-[(R)-dihydrolipoyl]-L-lysyl-[protein] + succinyl-CoA = N(6)-[(R)-S(8)-succinyldihydrolipoyl]-L-lysyl-[protein] + CoA. It functions in the pathway amino-acid degradation; L-lysine degradation via saccharopine pathway; glutaryl-CoA from L-lysine: step 6/6. In terms of biological role, E2 component of the 2-oxoglutarate dehydrogenase (OGDH) complex which catalyzes the second step in the conversion of 2-oxoglutarate to succinyl-CoA and CO(2). In Buchnera aphidicola subsp. Baizongia pistaciae (strain Bp), this protein is Dihydrolipoyllysine-residue succinyltransferase component of 2-oxoglutarate dehydrogenase complex (sucB).